The following is a 331-amino-acid chain: PIN2/TERF1-interacting telomerase inhibitor 1 (331 aa).

3 disordered regions span residues 1-28, 156-175, and 197-331; these read MSML…DDSK, AQDG…LTTT, and SKSQ…KVSR. The G-patch domain maps to 26 to 72; the sequence is DSKFGQKMLEKMGWSKGKGLGAQEQGATEHIKVKVKNNHLGLGATNN. Residue serine 233 is modified to Phosphoserine. Residues 236–246 are compositionally biased toward basic residues; sequence HKAKRHKKKKR. Basic and acidic residues predominate over residues 247–261; it reads VEAERGPAAKKRDQV. The interval 254 to 328 is telomerase inhibitory domain (TID); sequence AAKKRDQVEL…DSAPVKKKKK (75 aa). Serine 269, serine 274, and serine 277 each carry phosphoserine. A TBM motif is present at residues 291 to 301; it reads QDDVPKPRKRR. The span at 297-306 shows a compositional bias: basic residues; that stretch reads PRKRRAKKTL.

This sequence belongs to the PINX1 family. Interacts with MCRS1, TERT, TERF1, NCL/nucleolin, and the telomerase RNA.

Its subcellular location is the nucleus. The protein resides in the nucleolus. It localises to the chromosome. The protein localises to the telomere. It is found in the centromere. Its subcellular location is the kinetochore. In terms of biological role, microtubule-binding protein essential for faithful chromosome segregation. Mediates TRF1 and TERT accumulation in nucleolus and enhances TRF1 binding to telomeres. Inhibits telomerase activity. May inhibit cell proliferation and act as tumor suppressor. This chain is PIN2/TERF1-interacting telomerase inhibitor 1, found in Rattus norvegicus (Rat).